Consider the following 66-residue polypeptide: MSQPLTVDCPTCGAPVEWTAANLNRPFCSDRCKLIDLGAWAAEEHKIPVAPDAEDELFSEDLPPRH.

Zn(2+)-binding residues include C9, C12, C28, and C32.

Belongs to the DNA gyrase inhibitor YacG family. As to quaternary structure, interacts with GyrB. The cofactor is Zn(2+).

In terms of biological role, inhibits all the catalytic activities of DNA gyrase by preventing its interaction with DNA. Acts by binding directly to the C-terminal domain of GyrB, which probably disrupts DNA binding by the gyrase. In Pseudomonas fluorescens (strain SBW25), this protein is DNA gyrase inhibitor YacG.